The following is a 785-amino-acid chain: Copal-8-ol diphosphate hydratase TPSSA3, chloroplastic (785 aa).

Arginine 240 is a substrate binding site. The Mg(2+) site is built by aspartate 372 and aspartate 374. The short motif at 372–375 (DIDD) is the DXDD motif element. Substrate is bound at residue arginine 459.

It belongs to the terpene synthase family. Mg(2+) is required as a cofactor.

It localises to the plastid. The protein localises to the chloroplast. It catalyses the reaction (2E,6E,10E)-geranylgeranyl diphosphate + H2O = 8-hydroxycopalyl diphosphate. The protein operates within secondary metabolite biosynthesis; terpenoid biosynthesis. Its function is as follows. Involved in the biosynthesis of labdane-type diterpenoid including sclareol, a diterpene-diol that is used as fragrance and flavoring, and has anticancer effects (able to kill leukemic and colon cancer cells by apoptosis). Sclareol can also be used as synthesis precursor of ambergris substitution fragance products such as ambrox. Terpene synthase that produces 8-hydroxycopalyl diphosphate from geranylgeranyl diphosphate (GGPP). In Salvia sclarea (Clary sage), this protein is Copal-8-ol diphosphate hydratase TPSSA3, chloroplastic.